We begin with the raw amino-acid sequence, 567 residues long: Urease subunit alpha (567 aa).

A Urease domain is found at 129 to 567 (GGIDTHIHFI…LPMAQRYFLF (439 aa)). Positions 134, 136, and 217 each coordinate Ni(2+). Lys-217 carries the post-translational modification N6-carboxylysine. Position 219 (His-219) interacts with substrate. His-246 and His-272 together coordinate Ni(2+). His-320 (proton donor) is an active-site residue. Asp-360 contributes to the Ni(2+) binding site.

This sequence belongs to the metallo-dependent hydrolases superfamily. Urease alpha subunit family. In terms of assembly, probable heterotrimer of UreA (gamma), UreB (beta) and UreC (alpha) subunits. Three heterotrimers associate to form the active enzyme. The trimeric urease interacts with an accessory complex composed of UreD, UreF and UreG, which is required for the assembly of the nickel containing metallocenter of UreC. The UreE protein may also play a direct role in nickel transfer to the urease apoprotein. The cofactor is Ni cation. In terms of processing, carboxylation allows a single lysine to coordinate two nickel ions.

The protein localises to the cytoplasm. It carries out the reaction urea + 2 H2O + H(+) = hydrogencarbonate + 2 NH4(+). The protein operates within nitrogen metabolism; urea degradation; CO(2) and NH(3) from urea (urease route): step 1/1. The polypeptide is Urease subunit alpha (Proteus mirabilis (strain HI4320)).